Consider the following 742-residue polypeptide: Glycine--tRNA ligase (742 aa).

One can recognise a WHEP-TRS domain in the interval 73 to 129 (KLAPLRAAVKEYGDLIRDLKAKGAPKIDIDKAVVELKARKRLLEDTEIALAPKEASF). Glu-309 provides a ligand contact to glycine. ATP is bound by residues 341 to 343 (RNE) and 352 to 353 (RV). Residue Glu-360 coordinates glycine. 467 to 468 (EC) provides a ligand contact to ATP. Glycine is bound at residue 586–588 (EPS). Position 593 (Arg-593) interacts with ATP.

It belongs to the class-II aminoacyl-tRNA synthetase family. In terms of assembly, homodimer.

Its subcellular location is the cytoplasm. It localises to the cell projection. The protein resides in the axon. The protein localises to the secreted. It is found in the extracellular exosome. The enzyme catalyses tRNA(Gly) + glycine + ATP = glycyl-tRNA(Gly) + AMP + diphosphate. It catalyses the reaction 2 ATP + H(+) = P(1),P(4)-bis(5'-adenosyl) tetraphosphate + diphosphate. Its function is as follows. Catalyzes the ATP-dependent ligation of glycine to the 3'-end of its cognate tRNA, via the formation of an aminoacyl-adenylate intermediate (Gly-AMP). Also produces diadenosine tetraphosphate (Ap4A), a universal pleiotropic signaling molecule needed for cell regulation pathways, by direct condensation of 2 ATPs. Thereby, may play a special role in Ap4A homeostasis. The chain is Glycine--tRNA ligase from Caenorhabditis elegans.